A 1410-amino-acid polypeptide reads, in one-letter code: Slit homolog 1 protein (1410 aa).

The N-terminal stretch at 1-16 (MLICFIFILLIPESAT) is a signal peptide. An LRRNT 1 domain is found at 17–43 (CPAECVCVDRTVSCVGQQLTEVPQNIP). LRR repeat units lie at residues 22–42 (VCVD…PQNI), 43–66 (PNDT…DFSS), 67–90 (LMNL…SFSS), 91–114 (LVFL…VFQN), 116–138 (LKLT…QLQG), 140–162 (EFLE…VISS), 163–186 (WVSL…SNAR), 219–242 (TVCA…FMTC), 286–309 (PPST…SFKN), 310–333 (LKNL…AFLG), 335–357 (HNLH…TFEG), 358–381 (LGSL…TFDH), 383–405 (PKLS…TFQN), 407–430 (TSLS…WLAQ), 442–465 (ARCE…KFKC), 489–510 (CDCY…PTSI), 511–535 (PRFA…NIHV), 536–559 (LENL…SFEK), 561–583 (SKLR…VLDE), and 585–607 (SNLE…FFNK). One can recognise an LRRCT 1 domain in the interval 195–243 (NPWNCDCRLRWMRKWLEKAEGQNKTVCATPLNLQGSSIEILQDKFMTCS). The 28-residue stretch at 259 to 286 (ICPLPCTCTGTTVDCRDSGLTYVPTNLP) folds into the LRRNT 2 domain. In terms of domain architecture, LRRCT 2 spans 417–466 (NPLICDCNLQWLAQINLQKNIETSGARCEQPKRLRKKKFATLPPNKFKCK). The LRRNT 3 domain occupies 484-511 (ICPTQCDCYGTTVDCNKRGLNTIPTSIP). In terms of domain architecture, LRRCT 3 spans 619–671 (NDLLCDCRILPLMSWLRSNSSHSIDIPPCQQFQYSDNESDKQRCAAFPEETCS). Positions 677-703 (CPPKCSCLDRVVRCSNKNLTSFPSRIP) constitute an LRRNT 4 domain. LRR repeat units lie at residues 681–703 (CSCL…SRIP), 704–726 (FDTT…DLNR), 727–750 (LYSL…TFSN), 752–774 (TRLS…AFNG), 775–798 (LNAL…AFSN), and 800–823 (TSIT…WFSK). Positions 810-859 (NSLYCDCNMAWFSKWIKSKFIEAGIARCEYPNTVSNQLLLTAQPYQFTCD) constitute an LRRCT 4 domain. EGF-like domains follow at residues 871-906 (DLCL…VHCE) and 908-945 (QIDA…DYCE). 18 disulfides stabilise this stretch: Cys873–Cys884, Cys878–Cys894, Cys896–Cys905, Cys912–Cys923, Cys917–Cys933, Cys935–Cys944, Cys951–Cys962, Cys956–Cys971, Cys973–Cys982, Cys989–Cys1002, Cys996–Cys1011, Cys1013–Cys1022, Cys1029–Cys1040, Cys1034–Cys1049, Cys1051–Cys1060, Cys1076–Cys1086, Cys1081–Cys1097, and Cys1099–Cys1108. Residues 947–983 (NIDDCVNSKCENGGKCVDLINSYRCDCPMEYEGKHCE) enclose the EGF-like 1; calcium-binding domain. The 39-residue stretch at 985 to 1023 (KLEYCTKKLNPCENNGKCIPINGSYSCMCSPGFTGNNCE) folds into the EGF-like 3 domain. Residues 1025-1061 (NIDDCKNVECQNGGSCVDGILSYDCLCRPGYAGQYCE) enclose the EGF-like 2; calcium-binding domain. Positions 1072–1109 (KTDACQQSACGQGECVASQNSSDFTCKCHEGFSGPSCD) constitute an EGF-like 4 domain. The region spanning 1112-1285 (MSVGFKNPGA…LENVNTEQSC (174 aa)) is the Laminin G-like domain. The LRR 27 repeat unit spans residues 1197 to 1221 (TSERKCFLQIDKNPVQIVENSGKSD). Cystine bridges form between Cys1259–Cys1285, Cys1292–Cys1302, Cys1297–Cys1314, Cys1316–Cys1325, Cys1332–Cys1368, Cys1346–Cys1382, Cys1357–Cys1398, and Cys1361–Cys1400. Positions 1288–1326 (TVNFCAGIDCGNGKCTNNALSPKGYMCQCDSHFSGEHCD) constitute an EGF-like 5 domain. In terms of domain architecture, CTCK spans 1332–1406 (CDKQKFRRHH…QCQCEPTKSV (75 aa)).

Interacts with eva-1.

It localises to the secreted. In terms of biological role, functions as a ligand for sax-3 receptor during larval development. Acts via the sax-3/Robo receptor to direct ventral axon guidance and guidance at the midline during embryonic development. This Caenorhabditis elegans protein is Slit homolog 1 protein (slt-1).